We begin with the raw amino-acid sequence, 512 residues long: Alanine--glyoxylate aminotransferase 2, mitochondrial (512 aa).

A mitochondrion-targeting transit peptide spans 1–39 (MSLAWRTLQKAFYLETSLRILQMRPSLSCASRIYVPKLT). Position 55 is an N6-acetyllysine (K55). The residue at position 69 (K69) is an N6-acetyllysine; alternate. K69 carries the N6-succinyllysine; alternate modification. K82 carries the N6-acetyllysine modification. An N6-acetyllysine; alternate modification is found at K260. K260 bears the N6-succinyllysine; alternate mark. K302 carries the N6-succinyllysine modification. At K348 the chain carries N6-(pyridoxal phosphate)lysine. N6-acetyllysine; alternate is present on residues K415 and K418. N6-succinyllysine; alternate occurs at positions 415 and 418. K452 is subject to N6-acetyllysine.

This sequence belongs to the class-III pyridoxal-phosphate-dependent aminotransferase family. In terms of assembly, homotetramer. It depends on pyridoxal 5'-phosphate as a cofactor. Expressed in the liver, lung and kidney.

It is found in the mitochondrion. The enzyme catalyses glyoxylate + L-alanine = glycine + pyruvate. It carries out the reaction (R)-3-amino-2-methylpropanoate + pyruvate = 2-methyl-3-oxopropanoate + L-alanine. It catalyses the reaction 3-oxopropanoate + L-alanine = beta-alanine + pyruvate. The catalysed reaction is 2-oxobutanoate + L-alanine = (2S)-2-aminobutanoate + pyruvate. The enzyme catalyses N(omega),N(omega)-dimethyl-L-arginine + pyruvate = 5-(3,3-dimethylguanidino)-2-oxopentanoate + L-alanine. It carries out the reaction N(omega),N('omega)-dimethyl-L-arginine + pyruvate = 5-(3,3'-dimethylguanidino)-2-oxopentanoate + L-alanine. It catalyses the reaction N(omega),N(omega)-dimethyl-L-arginine + glyoxylate = 5-(3,3-dimethylguanidino)-2-oxopentanoate + glycine. The catalysed reaction is N(omega),N('omega)-dimethyl-L-arginine + glyoxylate = 5-(3,3'-dimethylguanidino)-2-oxopentanoate + glycine. The enzyme catalyses N(omega)-methyl-L-arginine + pyruvate = 5-(3-methylguanidino)-2-oxopentanoate + L-alanine. It carries out the reaction N(omega)-methyl-L-arginine + glyoxylate = 5-(3-methylguanidino)-2-oxopentanoate + glycine. It catalyses the reaction L-ornithine + pyruvate = 5-amino-2-oxopentanoate + L-alanine. The catalysed reaction is L-ornithine + glyoxylate = 5-amino-2-oxopentanoate + glycine. The enzyme catalyses (2S)-2-aminobutanoate + glyoxylate = 2-oxobutanoate + glycine. It carries out the reaction N(omega),N(omega)-dimethyl-L-arginine + oxaloacetate = 5-(3,3-dimethylguanidino)-2-oxopentanoate + L-aspartate. It catalyses the reaction oxaloacetate + L-alanine = L-aspartate + pyruvate. The catalysed reaction is N(omega),N(omega)-dimethyl-L-arginine + 2-oxobutanoate = 5-(3,3-dimethylguanidino)-2-oxopentanoate + (2S)-2-aminobutanoate. The enzyme catalyses 2-oxopentanoate + N(omega),N(omega)-dimethyl-L-arginine = 5-(3,3-dimethylguanidino)-2-oxopentanoate + L-2-aminopentanoate. It carries out the reaction 2-oxohexanoate + N(omega),N(omega)-dimethyl-L-arginine = L-2-aminohexanoate + 5-(3,3-dimethylguanidino)-2-oxopentanoate. Its activity is regulated as follows. Inhibited by 5-fluorouracil and 6-fluorouracil. Inhibited by phenylhydrazine, hydroxylamine, l-amino-L-proline, para-chloromercuribenzoate and HgCl2. Multifunctional aminotransferase with a broad substrate specificity. Catalyzes the conversion of glyoxylate to glycine using alanine as the amino donor. Catalyzes metabolism of not L- but the D-isomer of D-beta-aminoisobutyric acid to generate 2-methyl-3-oxopropanoate and alanine. Catalyzes the transfer of the amino group from beta-alanine to pyruvate to yield L-alanine and 3-oxopropanoate. Can metabolize NG-monomethyl-L-arginine (NMMA), asymmetric NG,NG-dimethyl-L-arginine (ADMA) and symmetric NG,N'G-dimethyl-L-arginine (SDMA). ADMA is a potent inhibitor of nitric-oxide (NO) synthase, and this activity provides mechanism through which the kidney regulates blood pressure. In Rattus norvegicus (Rat), this protein is Alanine--glyoxylate aminotransferase 2, mitochondrial (Agxt2).